Reading from the N-terminus, the 337-residue chain is Acetyl-coenzyme A synthetase (337 aa).

CoA is bound by residues 131–134 (RGGR), Thr249, and Asn273. 325 to 327 (GEP) provides a ligand contact to ATP.

This sequence belongs to the ATP-dependent AMP-binding enzyme family. Mg(2+) serves as cofactor. Post-translationally, acetylated. Deacetylation by the SIR2-homolog deacetylase activates the enzyme.

The catalysed reaction is acetate + ATP + CoA = acetyl-CoA + AMP + diphosphate. Functionally, catalyzes the conversion of acetate into acetyl-CoA (AcCoA), an essential intermediate at the junction of anabolic and catabolic pathways. AcsA undergoes a two-step reaction. In the first half reaction, AcsA combines acetate with ATP to form acetyl-adenylate (AcAMP) intermediate. In the second half reaction, it can then transfer the acetyl group from AcAMP to the sulfhydryl group of CoA, forming the product AcCoA. This is Acetyl-coenzyme A synthetase (acsA) from Nostoc linckia.